A 239-amino-acid polypeptide reads, in one-letter code: tRNA (guanine-N(7)-)-methyltransferase (239 aa).

S-adenosyl-L-methionine is bound by residues glutamate 69, glutamate 94, aspartate 121, and aspartate 144. Aspartate 144 is a catalytic residue. Substrate is bound at residue lysine 148. The tract at residues 150-155 (RHNKRR) is interaction with RNA. Substrate contacts are provided by residues aspartate 180 and 217–220 (TKFE).

This sequence belongs to the class I-like SAM-binding methyltransferase superfamily. TrmB family. Monomer.

It catalyses the reaction guanosine(46) in tRNA + S-adenosyl-L-methionine = N(7)-methylguanosine(46) in tRNA + S-adenosyl-L-homocysteine. Its pathway is tRNA modification; N(7)-methylguanine-tRNA biosynthesis. In terms of biological role, catalyzes the formation of N(7)-methylguanine at position 46 (m7G46) in tRNA. This is tRNA (guanine-N(7)-)-methyltransferase from Yersinia enterocolitica serotype O:8 / biotype 1B (strain NCTC 13174 / 8081).